Reading from the N-terminus, the 468-residue chain is Aspartate ammonia-lyase (468 aa).

L-aspartate-binding residues include Thr-101, Ser-140, Thr-141, Asn-142, Thr-187, and His-188. Residues 317–326 (GSSIMPGKVN) form an SS loop region. Residue Ser-318 is the Proton acceptor of the active site. Positions 319 and 324 each coordinate L-aspartate.

The protein belongs to the class-II fumarase/aspartase family. Aspartase subfamily. As to quaternary structure, homotetramer.

The catalysed reaction is L-aspartate = fumarate + NH4(+). With respect to regulation, unlike E.coli aspartase, the enzyme is not activated by the presence of divalent metal ions at alkaline pH. In terms of biological role, catalyzes the reversible conversion of L-aspartate to fumarate and ammonia. Is highly specific for L-aspartate in the deamination reaction, and cannot use alternative substrates such as D-aspartic acid, alpha-methyl-DL-aspartic acid, beta-methyl-DL-aspartic acid or L-glutamate. In the reverse reaction, alternative nucleophiles (such as hydroxylamine, hydrazine, methoxylamine and methylamine) can replace ammonia in vitro, leading to the formation of N-substituted aspartic acid derivatives. This Bacillus sp protein is Aspartate ammonia-lyase.